We begin with the raw amino-acid sequence, 331 residues long: 5-dehydro-2-deoxygluconokinase (331 aa).

This sequence belongs to the carbohydrate kinase PfkB family.

The catalysed reaction is 5-dehydro-2-deoxy-D-gluconate + ATP = 6-phospho-5-dehydro-2-deoxy-D-gluconate + ADP + H(+). Its pathway is polyol metabolism; myo-inositol degradation into acetyl-CoA; acetyl-CoA from myo-inositol: step 5/7. Its function is as follows. Catalyzes the phosphorylation of 5-dehydro-2-deoxy-D-gluconate (2-deoxy-5-keto-D-gluconate or DKG) to 6-phospho-5-dehydro-2-deoxy-D-gluconate (DKGP). In Photobacterium profundum (strain SS9), this protein is 5-dehydro-2-deoxygluconokinase.